Consider the following 137-residue polypeptide: Nucleoside diphosphate kinase (137 aa).

Positions 9, 57, 85, 91, 102, and 112 each coordinate ATP. The active-site Pros-phosphohistidine intermediate is the H115.

The protein belongs to the NDK family. In terms of assembly, homotetramer. Requires Mg(2+) as cofactor.

The protein resides in the cytoplasm. The catalysed reaction is a 2'-deoxyribonucleoside 5'-diphosphate + ATP = a 2'-deoxyribonucleoside 5'-triphosphate + ADP. It catalyses the reaction a ribonucleoside 5'-diphosphate + ATP = a ribonucleoside 5'-triphosphate + ADP. In terms of biological role, major role in the synthesis of nucleoside triphosphates other than ATP. The ATP gamma phosphate is transferred to the NDP beta phosphate via a ping-pong mechanism, using a phosphorylated active-site intermediate. This is Nucleoside diphosphate kinase from Campylobacter curvus (strain 525.92).